The following is a 1110-amino-acid chain: MTDVSAAAGGATAPAETAATSSSASKPLTNGANKTSTAMAAPTATPTTAATASGAAEAGAITSVAGISNQVKLEHHHHRQSNNNRPVAPYPPVPAAKPKPTPTPESKFKSTSREPGMSSSSSSAQQDVDEVARLFEEKPEAFEKWLTERAPPEALSRLQEFIESRKPLKRPSVTSDLFQQWMSASPTVQQKSPRSLSNSSASSTLPECRRHLMDLDEGELFMELIRDVANELDIDVLCHKILVNVGLLTHADRGSLFLAKGTPHNKYLVAKLFDVTQKTALKDAVTRASAEEIIIPFGIGIAGMVAQTKQMINIKEAYKDARFNCEIDLKTGYKTNAILCMPICNYEGDIIGVAQIINKTNGCMEFDEHDVEIFRRYLTFCGIGIQNAQLFEMSVQEYRRNQILLNLARSIFEEQNNLECLVTKIMTEARELLNCERCSVFLVDLDCCEASHLEKIIEKPNQPEQRPTRAIMPGDSFDEKKMRNRFTVLFELGGEYQAASVSRPSKTELSTSTLAQIAQFVATTGQTVNICDVHEWVRDHNQIRAESEIDSTQAILCMPIVNAQKVVIGVAQLINKANGVPFTESDASIFEAFAIFCGLGIHNTQMYENACKLMAKQKVALECLSYHATASQDQTEKLTQDAIAEAESYNLYSFTFTDFELVDDDTCRAVLRMFLQCNLVSQFQIPYDVLCRWVLSVRKNYRPVKYHNWRHALNVAQTMFAMLKTGKMERFMTDLEILGLLVACLCHDLDHRGTNNAFQTKTESPLAILYTTSTMEHHHFDQCVMILNSEGNNIFQALSPEDYRSVMKTVESAILSTDLAMYFKKRNAFLELVENGEFDWQGEEKKDLLCGMMMTACDVSAIAKPWEVQHKVAKLVADEFFDQGDLEKLQLNTQPVAMMDRERKDELPKMQVGFIDVICLPLYRVLCDTFPWITPLYEGTLENRRNWQDLAEKVEMGLTWIDHDTIDKPVEEFAGCADEEIKDIEFTVTTLNCNQQAQHGAGAGGDDSHTPEHQRSGSRLSMKKTGALGKAVRSKLSKTLYNSMDGSKPKTSLKLLESHVSEDMDDKSPTSPSQPHAGGSVGRMSASSSTSSAGTVVDKSKKRSKLCSLL.

2 stretches are compositionally biased toward low complexity: residues M1–S25 and T35–A55. Disordered stretches follow at residues M1–A55, I67–V128, and A184–S203. A compositionally biased stretch (pro residues) spans A88–T103. Low complexity predominate over residues S192 to S203. GAF domains are found at residues D233–I385 and N417–I601. Positions S631 to V954 constitute a PDEase domain. Residue H707 is the Proton donor of the active site. A divalent metal cation-binding residues include H711, H747, D748, and D858. Disordered regions lie at residues A997–L1028 and L1040–L1110. 2 stretches are compositionally biased toward basic and acidic residues: residues D1006 to R1015 and L1056 to S1068. Positions G1082–V1097 are enriched in low complexity. Residues S1100 to L1110 show a composition bias toward basic residues. A Cysteine methyl ester modification is found at C1107. C1107 carries the S-farnesyl cysteine lipid modification. A propeptide spans S1108 to L1110 (removed in mature form).

This sequence belongs to the cyclic nucleotide phosphodiesterase family. Interacts with PrBP. Requires a divalent metal cation as cofactor.

The protein localises to the cell membrane. It carries out the reaction 3',5'-cyclic GMP + H2O = GMP + H(+). Its function is as follows. Has a role regulating cGMP transport in Malpighian tubule principal cells. This chain is cGMP-specific 3',5'-cyclic phosphodiesterase, found in Drosophila pseudoobscura pseudoobscura (Fruit fly).